A 266-amino-acid chain; its full sequence is Type 1 encapsulin shell protein (266 aa).

The protein belongs to the encapsulin family. Family 1 subfamily. Homomultimeric. This encapsulin nanocompartment is formed by 60 subunits, and encloses one Dyp homohexamer; partially assembled 58-subunit compartments with and without cargo are also purified. May assemble the shell from dimers. Monomers form pentamers, which assemble to form hollow shells with pores 5-8 Angstroms in diameter where 3 pentamers meet.

It localises to the encapsulin nanocompartment. Its function is as follows. Shell component of a type 1 encapsulin nanocompartment. Assembles into proteinaceous shells 23-24 nm in diameter with 2-2.5 nm thick walls. Endogenous cargo protein DyP (dye-decolorizing peroxidase) is targeted to the interior via its C-terminal extension; only 1 DyP hexamer is incorporated into each shell. Empty shells can be isolated in the absence of cargo. Cargo encapsulation probably precedes assembly of the nanocompartment; may assemble or disassemble via dimers, subcomplexes with a distinct preference for even numbers of subunits are detected. Nanocompartments are stable against mechanical forces; loaded nanocompartments are less stable than empty ones. Nanocompartments are stable between pH 5-10; they aggregate at pH 9-10 and start to disassemble at pH 11. They are stable in 1M NaCl, 1 M MgCl(2) and 1M CaCl(2), unstable in 20% DMSO (dimethylsulfoxide) and are stable in 20% but not 40% ethanol. In Brevibacterium linens, this protein is Type 1 encapsulin shell protein.